We begin with the raw amino-acid sequence, 313 residues long: L-lactate dehydrogenase 1 (313 aa).

Residues Val-15, Asp-36, Arg-41, and Tyr-66 each contribute to the NAD(+) site. Residues Gln-83, Arg-89, and 121 to 124 (NPVD) contribute to the substrate site. Residues 119–121 (ASN) and Ser-144 contribute to the NAD(+) site. Substrate is bound at residue 149–152 (DTAR). Residues Arg-154 and His-169 each contribute to the beta-D-fructose 1,6-bisphosphate site. Catalysis depends on His-176, which acts as the Proton acceptor. At Tyr-218 the chain carries Phosphotyrosine. Thr-227 provides a ligand contact to substrate.

Belongs to the LDH/MDH superfamily. LDH family. As to quaternary structure, homotetramer.

It is found in the cytoplasm. It carries out the reaction (S)-lactate + NAD(+) = pyruvate + NADH + H(+). Its pathway is fermentation; pyruvate fermentation to lactate; (S)-lactate from pyruvate: step 1/1. Its activity is regulated as follows. Allosterically activated by fructose 1,6-bisphosphate (FBP). Its function is as follows. Catalyzes the conversion of lactate to pyruvate. In Listeria innocua serovar 6a (strain ATCC BAA-680 / CLIP 11262), this protein is L-lactate dehydrogenase 1.